We begin with the raw amino-acid sequence, 436 residues long: Probable glucose-6-phosphate isomerase (436 aa).

Glutamate 272 serves as the catalytic Proton donor. Residues histidine 293 and lysine 404 contribute to the active site.

This sequence belongs to the GPI family.

It is found in the cytoplasm. It carries out the reaction alpha-D-glucose 6-phosphate = beta-D-fructose 6-phosphate. The protein operates within carbohydrate biosynthesis; gluconeogenesis. It functions in the pathway carbohydrate degradation; glycolysis; D-glyceraldehyde 3-phosphate and glycerone phosphate from D-glucose: step 2/4. Functionally, catalyzes the reversible isomerization of glucose-6-phosphate to fructose-6-phosphate. The polypeptide is Probable glucose-6-phosphate isomerase (Haloarcula marismortui (strain ATCC 43049 / DSM 3752 / JCM 8966 / VKM B-1809) (Halobacterium marismortui)).